The primary structure comprises 159 residues: Putative viral CXC chemokine 2 (159 aa).

2 disulfide bridges follow: Cys-50/Cys-77 and Cys-52/Cys-93.

This sequence belongs to the intercrine alpha (chemokine CxC) family.

The polypeptide is Putative viral CXC chemokine 2 (UL147) (Human cytomegalovirus (strain Merlin) (HHV-5)).